The chain runs to 267 residues: Phosphoethanolamine/phosphocholine phosphatase (267 aa).

D32 serves as the catalytic Nucleophile. Mg(2+)-binding residues include D32 and D34. The active-site Proton donor is the D34. Positions 43 and 123 each coordinate substrate. A Mg(2+)-binding site is contributed by D203.

Belongs to the HAD-like hydrolase superfamily. PHOSPHO family. It depends on Mg(2+) as a cofactor. As to expression, expressed at sites of mineralization in bone and cartilage. Highly expressed in osteoblast cell line SaOS-2 which produces a mineralized matrix, but not in MG-63 cell line, which do not mineralize.

It localises to the extracellular vesicle. It catalyses the reaction phosphoethanolamine + H2O = ethanolamine + phosphate. It carries out the reaction phosphocholine + H2O = choline + phosphate. Its function is as follows. Phosphatase that has a high activity toward phosphoethanolamine (PEA) and phosphocholine (PCho). Involved in the generation of inorganic phosphate for bone mineralization. Acts in a non-redundant manner with PHOSPHO1 in skeletal mineralization: while PHOSPHO1 mediates the initiation of hydroxyapatite crystallization in the matrix vesicles (MVs), ALPL/TNAP catalyzes the spread of hydroxyapatite crystallization in the extracellular matrix. The protein is Phosphoethanolamine/phosphocholine phosphatase of Homo sapiens (Human).